The sequence spans 419 residues: UDP-N-acetylglucosamine 1-carboxyvinyltransferase (419 aa).

22 to 23 (KN) contributes to the phosphoenolpyruvate binding site. Arg-92 serves as a coordination point for UDP-N-acetyl-alpha-D-glucosamine. The Proton donor role is filled by Cys-116. Cys-116 is modified (2-(S-cysteinyl)pyruvic acid O-phosphothioketal). UDP-N-acetyl-alpha-D-glucosamine-binding positions include 121-125 (RPIDL), Asp-307, and Leu-329.

This sequence belongs to the EPSP synthase family. MurA subfamily.

The protein resides in the cytoplasm. It catalyses the reaction phosphoenolpyruvate + UDP-N-acetyl-alpha-D-glucosamine = UDP-N-acetyl-3-O-(1-carboxyvinyl)-alpha-D-glucosamine + phosphate. The protein operates within cell wall biogenesis; peptidoglycan biosynthesis. Functionally, cell wall formation. Adds enolpyruvyl to UDP-N-acetylglucosamine. The sequence is that of UDP-N-acetylglucosamine 1-carboxyvinyltransferase from Campylobacter fetus subsp. fetus (strain 82-40).